Reading from the N-terminus, the 209-residue chain is Large ribosomal subunit protein uL4 (209 aa).

The tract at residues 46–72 (GTSSTKTRSEVRGSSKKPWKQKGTGRA) is disordered. The segment covering 59-72 (SSKKPWKQKGTGRA) has biased composition (basic residues).

It belongs to the universal ribosomal protein uL4 family. As to quaternary structure, part of the 50S ribosomal subunit.

Its function is as follows. One of the primary rRNA binding proteins, this protein initially binds near the 5'-end of the 23S rRNA. It is important during the early stages of 50S assembly. It makes multiple contacts with different domains of the 23S rRNA in the assembled 50S subunit and ribosome. Functionally, forms part of the polypeptide exit tunnel. This Borreliella burgdorferi (strain ATCC 35210 / DSM 4680 / CIP 102532 / B31) (Borrelia burgdorferi) protein is Large ribosomal subunit protein uL4.